A 234-amino-acid polypeptide reads, in one-letter code: uncharacterized protein (234 aa).

The disordered stretch occupies residues 62–99; the sequence is NEESISDLNSDNPGNSEPSDVESFVLSDEDENSEKDFS. Residues 67-79 show a composition bias toward polar residues; the sequence is SDLNSDNPGNSEP.

This is an uncharacterized protein from Acanthamoeba polyphaga (Amoeba).